Reading from the N-terminus, the 327-residue chain is Phosphate acyltransferase (327 aa).

The protein belongs to the PlsX family. Homodimer. Probably interacts with PlsY.

It is found in the cytoplasm. It catalyses the reaction a fatty acyl-[ACP] + phosphate = an acyl phosphate + holo-[ACP]. Its pathway is lipid metabolism; phospholipid metabolism. Its function is as follows. Catalyzes the reversible formation of acyl-phosphate (acyl-PO(4)) from acyl-[acyl-carrier-protein] (acyl-ACP). This enzyme utilizes acyl-ACP as fatty acyl donor, but not acyl-CoA. In Thermotoga neapolitana (strain ATCC 49049 / DSM 4359 / NBRC 107923 / NS-E), this protein is Phosphate acyltransferase.